The chain runs to 100 residues: Mitochondrial zinc maintenance protein 1, mitochondrial (100 aa).

It belongs to the complex I LYR family. MZM1 subfamily. Interacts with RIP1.

It is found in the mitochondrion matrix. Functionally, assembly factor required for Rieske Fe-S protein RIP1 incorporation into the cytochrome b-c1 (CIII) complex. Functions as a chaperone, binding to this subunit within the mitochondrial matrix and stabilizing it prior to its translocation and insertion into the late CIII dimeric intermediate within the mitochondrial inner membrane. Modulates the mitochondrial matrix zinc pool. This chain is Mitochondrial zinc maintenance protein 1, mitochondrial (new18), found in Schizosaccharomyces pombe (strain 972 / ATCC 24843) (Fission yeast).